The chain runs to 233 residues: Nuclear speckle RNA-binding protein A (233 aa).

3 disordered regions span residues 1-54, 68-92, and 214-233; these read MADG…VPDT, VQSGEGGSVSMGRSGGGGGGGGGNV, and FLRLQFSRKPGSRPGQRGRR. Gly residues predominate over residues 71–91; that stretch reads GEGGSVSMGRSGGGGGGGGGN. The RRM domain occupies 136-222; it reads NTLYVEGLPS…KFLRLQFSRK (87 aa).

In terms of tissue distribution, expressed in root meristems, lateral root primordia and root vascular tissues.

The protein resides in the nucleus speckle. In terms of biological role, alternative splicing (AS) regulator that binds to specific mRNAs and modulates auxin effects on the transcriptome. Displaced from its targets upon binding to AS competitor long non-coding RNA (ASCO-RNA). This Arabidopsis thaliana (Mouse-ear cress) protein is Nuclear speckle RNA-binding protein A.